A 185-amino-acid chain; its full sequence is Transcription termination/antitermination protein NusG (185 aa).

Residues 134 to 162 (PGQMVRVIDGPFNDFDGLVEEVNYEKNRL) form the KOW domain.

Belongs to the NusG family.

Functionally, participates in transcription elongation, termination and antitermination. This chain is Transcription termination/antitermination protein NusG, found in Xylella fastidiosa (strain Temecula1 / ATCC 700964).